Consider the following 1548-residue polypeptide: UDP-glucose:glycoprotein glucosyltransferase (1548 aa).

A signal peptide spans M1 to G22. A glycan (N-linked (GlcNAc...) asparagine) is linked at N181. The segment covering T243 to K253 has biased composition (basic and acidic residues). A disordered region spans residues T243 to A265. N-linked (GlcNAc...) asparagine glycans are attached at residues N266 and N864. The segment at S1227–L1548 is glucosyltransferase. The segment covering E1512 to A1523 has biased composition (basic and acidic residues). Positions E1512–L1548 are disordered. Positions H1545 to L1548 match the Prevents secretion from ER motif.

It belongs to the glycosyltransferase 8 family. Monomer. May interact with CG7484/Sep15. It depends on Ca(2+) as a cofactor. Mn(2+) serves as cofactor.

Its subcellular location is the endoplasmic reticulum lumen. The protein localises to the endoplasmic reticulum-Golgi intermediate compartment. It catalyses the reaction N(4)-(alpha-D-Man-(1-&gt;2)-alpha-D-Man-(1-&gt;2)-alpha-D-Man-(1-&gt;3)-[alpha-D-Man-(1-&gt;2)-alpha-D-Man-(1-&gt;3)-[alpha-D-Man-(1-&gt;2)-alpha-D-Man-(1-&gt;6)]-alpha-D-Man-(1-&gt;6)]-beta-D-Man-(1-&gt;4)-beta-D-GlcNAc-(1-&gt;4)-beta-D-GlcNAc)-L-asparaginyl-[protein] (N-glucan mannose isomer 9A1,2,3B1,2,3) + UDP-alpha-D-glucose = N(4)-(alpha-D-Glc-(1-&gt;3)-alpha-D-Man-(1-&gt;2)-alpha-D-Man-(1-&gt;2)-alpha-D-Man-(1-&gt;3)-[alpha-D-Man-(1-&gt;2)-alpha-D-Man-(1-&gt;3)-[alpha-D-Man-(1-&gt;2)-alpha-D-Man-(1-&gt;6)]-alpha-D-Man-(1-&gt;6)]-beta-D-Man-(1-&gt;4)-beta-D-GlcNAc-(1-&gt;4)-beta-D-GlcNAc)-L-asparaginyl-[protein] + UDP + H(+). It functions in the pathway protein modification; protein glycosylation. Functionally, recognizes glycoproteins with minor folding defects. Reglucosylates single N-glycans near the misfolded part of the protein, thus providing quality control for protein folding in the endoplasmic reticulum. Reglucosylated proteins are recognized by calreticulin for recycling to the endoplasmic reticulum and refolding or degradation. This is UDP-glucose:glycoprotein glucosyltransferase from Drosophila melanogaster (Fruit fly).